Here is a 395-residue protein sequence, read N- to C-terminus: Flap endonuclease 1 (395 aa).

Residues 1–104 (MGIKQLYQVI…GELAKRFARK (104 aa)) are N-domain. Position 34 (Asp34) interacts with Mg(2+). Positions 47 and 70 each coordinate DNA. Mg(2+) is bound by residues Asp86, Glu158, Glu160, Asp179, and Asp181. The interval 122–253 (DVEKFSRRTV…NTALKLIRDH (132 aa)) is I-domain. A DNA-binding site is contributed by Glu158. Positions 231 and 233 each coordinate DNA. Asp233 provides a ligand contact to Mg(2+). The interval 341-349 (QQSRLEGFF) is interaction with PCNA. Positions 344–395 (RLEGFFKPVARTDEEKASLKRKHDEKIQEQKKKKKEEAKAKKEAKSRPRGAG) are disordered. A compositionally biased stretch (basic and acidic residues) spans 353-389 (ARTDEEKASLKRKHDEKIQEQKKKKKEEAKAKKEAKS).

The protein belongs to the XPG/RAD2 endonuclease family. FEN1 subfamily. Interacts with PCNA. Three molecules of fen1 bind to one PCNA trimer with each molecule binding to one PCNA monomer. PCNA stimulates the nuclease activity without altering cleavage specificity. It depends on Mg(2+) as a cofactor. In terms of processing, phosphorylated. Phosphorylation upon DNA damage induces relocalization to the nuclear plasma.

The protein localises to the nucleus. It localises to the nucleolus. It is found in the nucleoplasm. The protein resides in the mitochondrion. In terms of biological role, structure-specific nuclease with 5'-flap endonuclease and 5'-3' exonuclease activities involved in DNA replication and repair. During DNA replication, cleaves the 5'-overhanging flap structure that is generated by displacement synthesis when DNA polymerase encounters the 5'-end of a downstream Okazaki fragment. It enters the flap from the 5'-end and then tracks to cleave the flap base, leaving a nick for ligation. Also involved in the long patch base excision repair (LP-BER) pathway, by cleaving within the apurinic/apyrimidinic (AP) site-terminated flap. Acts as a genome stabilization factor that prevents flaps from equilibrating into structures that lead to duplications and deletions. Also possesses 5'-3' exonuclease activity on nicked or gapped double-stranded DNA, and exhibits RNase H activity. Also involved in replication and repair of rDNA and in repairing mitochondrial DNA. The polypeptide is Flap endonuclease 1 (fen1) (Aspergillus niger (strain ATCC MYA-4892 / CBS 513.88 / FGSC A1513)).